The primary structure comprises 55 residues: Lantibiotic nisin-U (55 aa).

A propeptide spanning residues 1 to 24 is cleaved from the precursor; sequence MNNEDFNLDLIKISKENNSGASPR. Residue Thr26 is modified to 2,3-didehydrobutyrine. The segment at residues 27 to 31 is a cross-link (lanthionine (Ser-Cys)); that stretch reads SKSLC. Ser29 is modified (2,3-didehydroalanine (Ser)). 4 consecutive cross-links (beta-methyllanthionine (Thr-Cys)) follow at residues 32–35, 37–43, 47–50, and 49–52; these read TPGC, TGILMTC, TATC, and TCGC. At Thr42 the chain carries 2,3-didehydrobutyrine.

Post-translationally, maturation of lantibiotics involves the enzymatic conversion of Thr, and Ser into dehydrated AA and the formation of thioether bonds with cysteine. This is followed by membrane translocation and cleavage of the modified precursor.

It localises to the secreted. In terms of biological role, lanthionine-containing peptide antibiotic (lantibiotic) active on Gram-positive bacteria. The bactericidal activity of lantibiotics is based on depolarization of energized bacterial cytoplasmic membranes, initiated by the formation of aqueous transmembrane pores. The polypeptide is Lantibiotic nisin-U (nsuA) (Streptococcus uberis).